We begin with the raw amino-acid sequence, 573 residues long: Protein FAM227B (573 aa).

The stretch at 429–485 forms a coiled coil; the sequence is DNKKDFKRVKQRIKDDIKFLKEQQEQIDKELDRLQAKASKNLQEVKNDFENFLHKLR. Positions 497 to 521 are enriched in low complexity; sequence SASPSESLQSLQSPNSSLSSPAMSE. Residues 497-528 are disordered; that stretch reads SASPSESLQSLQSPNSSLSSPAMSEDFNSVEE.

It belongs to the FAM227 family.

The chain is Protein FAM227B (Fam227b) from Rattus norvegicus (Rat).